Reading from the N-terminus, the 218-residue chain is Riboflavin kinase (218 aa).

Residues 1-27 are disordered; that stretch reads MRPDGPRDPVAGPDSGPEPPYPVRLSG. Mg(2+) is bound by residues Thr44 and Asn46. Glu120 acts as the Nucleophile in catalysis.

This sequence belongs to the flavokinase family. Requires Zn(2+) as cofactor. It depends on Mg(2+) as a cofactor.

The enzyme catalyses riboflavin + ATP = FMN + ADP + H(+). It participates in cofactor biosynthesis; FMN biosynthesis; FMN from riboflavin (ATP route): step 1/1. Catalyzes the phosphorylation of riboflavin (vitamin B2) to form flavin mononucleotide (FMN) coenzyme. The chain is Riboflavin kinase (fmn1) from Neosartorya fischeri (strain ATCC 1020 / DSM 3700 / CBS 544.65 / FGSC A1164 / JCM 1740 / NRRL 181 / WB 181) (Aspergillus fischerianus).